The chain runs to 229 residues: All-trans retinoic acid-induced differentiation factor (229 aa).

Positions M1–A30 are cleaved as a signal peptide. Topologically, residues L31 to S199 are extracellular. N44, N79, N157, and N168 each carry an N-linked (GlcNAc...) asparagine glycan. Residues Q152–M193 form the EGF-like domain. 3 cysteine pairs are disulfide-bonded: C156/C171, C165/C181, and C183/C192. A helical membrane pass occupies residues L200–A220. Residues T221–S229 lie on the Cytoplasmic side of the membrane.

As to quaternary structure, interacts with NELL1; the interaction promotes osteoblastic differentiation and mineralization. Interacts with SLC37A3; the interaction is direct and both proteins are mutually dependent for their stability. As to expression, weakly expressed in hematopoietic cell lines.

The protein localises to the nucleus envelope. It is found in the cell membrane. It localises to the lysosome membrane. Its function is as follows. Promotes osteoblast cell differentiation and terminal mineralization. Plays a role in inducing the cell cycle arrest via inhibiting CCND1 expression in all-trans-retinoic acid (ATRA) signal pathway. In osteoclasts, forms a transporter complex with ATRAID for nitrogen-containing-bisphophonates (N-BPs) required for releasing N-BP molecules that have trafficked to lysosomes through fluid-phase endocytosis into the cytosol. This Homo sapiens (Human) protein is All-trans retinoic acid-induced differentiation factor.